A 189-amino-acid polypeptide reads, in one-letter code: CDP-archaeol synthase (189 aa).

Transmembrane regions (helical) follow at residues 6–26 (VAIA…AVLA), 71–91 (GVVL…TVGV), 96–116 (IAAA…ASFL), 125–145 (GAAF…ALTA), and 162–184 (VAIF…AFGL).

It belongs to the CDP-archaeol synthase family. It depends on Mg(2+) as a cofactor.

The protein resides in the cell membrane. The catalysed reaction is 2,3-bis-O-(geranylgeranyl)-sn-glycerol 1-phosphate + CTP + H(+) = CDP-2,3-bis-O-(geranylgeranyl)-sn-glycerol + diphosphate. It functions in the pathway membrane lipid metabolism; glycerophospholipid metabolism. Functionally, catalyzes the formation of CDP-2,3-bis-(O-geranylgeranyl)-sn-glycerol (CDP-archaeol) from 2,3-bis-(O-geranylgeranyl)-sn-glycerol 1-phosphate (DGGGP) and CTP. This reaction is the third ether-bond-formation step in the biosynthesis of archaeal membrane lipids. The chain is CDP-archaeol synthase from Natronomonas pharaonis (strain ATCC 35678 / DSM 2160 / CIP 103997 / JCM 8858 / NBRC 14720 / NCIMB 2260 / Gabara) (Halobacterium pharaonis).